Here is a 556-residue protein sequence, read N- to C-terminus: Mitochondrial distribution and morphology protein 34-2 (556 aa).

Residues 1–195 (MAFNFNWSPL…LPAIIHRLSL (195 aa)) form the SMP-LTD domain. 3 disordered regions span residues 206–239 (EEMN…DSLG), 299–423 (TDTS…PVTP), and 440–473 (HLPS…DATP). The span at 299–333 (TDTSEFPSSVISPLSPTLSREQSQMGSMSSLHETA) shows a compositional bias: polar residues. Residues 334-357 (SNASMQSRPSMSSHSFSTSTYGLS) are compositionally biased toward low complexity. Residues 362 to 374 (RHSKAHARKRKKR) show a composition bias toward basic residues. The segment covering 375-385 (VVDLRRPKTTD) has biased composition (basic and acidic residues). The segment covering 391-402 (SDESVMTESSRP) has biased composition (polar residues). A compositionally biased stretch (basic and acidic residues) spans 459 to 468 (ETIRGPKAED).

This sequence belongs to the MDM34 family. In terms of assembly, component of the ER-mitochondria encounter structure (ERMES) or MDM complex, composed of mmm1, mdm10, mdm12 and mdm34.

It is found in the mitochondrion outer membrane. Component of the ERMES/MDM complex, which serves as a molecular tether to connect the endoplasmic reticulum (ER) and mitochondria. Components of this complex are involved in the control of mitochondrial shape and protein biogenesis, and function in nonvesicular lipid trafficking between the ER and mitochondria. Mdm34 is required for the interaction of the ER-resident membrane protein mmm1 and the outer mitochondrial membrane-resident beta-barrel protein mdm10. The sequence is that of Mitochondrial distribution and morphology protein 34-2 from Penicillium rubens (strain ATCC 28089 / DSM 1075 / NRRL 1951 / Wisconsin 54-1255) (Penicillium chrysogenum).